Here is a 457-residue protein sequence, read N- to C-terminus: UDP-N-acetylmuramate--L-alanine ligase (457 aa).

Position 112 to 118 (112 to 118 (GTHGKTT)) interacts with ATP.

Belongs to the MurCDEF family.

The protein localises to the cytoplasm. The catalysed reaction is UDP-N-acetyl-alpha-D-muramate + L-alanine + ATP = UDP-N-acetyl-alpha-D-muramoyl-L-alanine + ADP + phosphate + H(+). It participates in cell wall biogenesis; peptidoglycan biosynthesis. Its function is as follows. Cell wall formation. The polypeptide is UDP-N-acetylmuramate--L-alanine ligase (Solidesulfovibrio magneticus (strain ATCC 700980 / DSM 13731 / RS-1) (Desulfovibrio magneticus)).